The chain runs to 495 residues: Ectonucleoside triphosphate diphosphohydrolase 2 (495 aa).

The Cytoplasmic segment spans residues 1–7; the sequence is MAGKVRS. A helical membrane pass occupies residues 8-28; sequence LLPPLLLAAAGLAGLLLLCVP. Residues 29 to 462 are Extracellular-facing; sequence TRDVREPPAL…PGLRKGTDFS (434 aa). Asn64 carries N-linked (GlcNAc...) asparagine glycosylation. The cysteines at positions 75 and 99 are disulfide-linked. Asn129 is a glycosylation site (N-linked (GlcNAc...) asparagine). Glu165 acts as the Proton acceptor in catalysis. An ATP-binding site is contributed by 204-208; sequence GASTQ. 4 disulfide bridges follow: Cys242/Cys284, Cys265/Cys310, Cys323/Cys328, and Cys377/Cys399. Asn294 is a glycosylation site (N-linked (GlcNAc...) asparagine). Asn378 and Asn443 each carry an N-linked (GlcNAc...) asparagine glycan. Residues 463-483 form a helical membrane-spanning segment; that stretch reads SWVVLLLLFASALLAALVLLL. At 484 to 495 the chain is on the cytoplasmic side; that stretch reads RQVHSAKLPSTI.

This sequence belongs to the GDA1/CD39 NTPase family. It depends on Ca(2+) as a cofactor. Mg(2+) serves as cofactor. Brain, placenta, skeletal muscle, kidney, pancreas, heart, ovary, testis, colon, small intestine, prostate and pancreas. No expression in adult thymus, spleen, lung, liver and peripheral blood leukocytes.

The protein localises to the cell membrane. It localises to the endoplasmic reticulum membrane. Its function is as follows. In the nervous system, could hydrolyze ATP and other nucleotides to regulate purinergic neurotransmission. Hydrolyzes ADP only to a marginal extent. The order of activity with different substrates is ATP &gt; GTP &gt; CTP = ITP &gt; UTP &gt;&gt; ADP = UDP. This Homo sapiens (Human) protein is Ectonucleoside triphosphate diphosphohydrolase 2 (ENTPD2).